Reading from the N-terminus, the 466-residue chain is Cysteine--tRNA ligase 1 (466 aa).

Cys27 is a binding site for Zn(2+). A 'HIGH' region motif is present at residues 29–39 (PTVQSPPHIGH). 3 residues coordinate Zn(2+): Cys211, His236, and Glu240. The short motif at 267 to 271 (KMSKS) is the 'KMSKS' region element. ATP is bound at residue Lys270.

It belongs to the class-I aminoacyl-tRNA synthetase family. In terms of assembly, monomer. Zn(2+) is required as a cofactor.

The protein resides in the cytoplasm. It carries out the reaction tRNA(Cys) + L-cysteine + ATP = L-cysteinyl-tRNA(Cys) + AMP + diphosphate. This is Cysteine--tRNA ligase 1 from Tropheryma whipplei (strain TW08/27) (Whipple's bacillus).